The primary structure comprises 214 residues: Glutathione S-transferase 1 (214 aa).

The 82-residue stretch at 2-83 (APMKLYGAVM…YAARKNKPEL (82 aa)) folds into the GST N-terminal domain. Glutathione is bound by residues Ser-12, 41–42 (HK), 54–55 (QV), and 67–68 (ES). Residues 88 to 214 (NLEEAAMVDV…KVAALMKPSA (127 aa)) form the GST C-terminal domain.

It belongs to the GST superfamily. Phi family. As to quaternary structure, homodimer or heterodimer of GST-I and GST-IV (=GST-II). As to expression, expressed in the stem and leaves, lower levels are seen in the pollen and endosperm.

The catalysed reaction is RX + glutathione = an S-substituted glutathione + a halide anion + H(+). Its function is as follows. Conjugation of reduced glutathione to a wide number of exogenous and endogenous hydrophobic electrophiles. Involved in the detoxification of certain herbicides. This chain is Glutathione S-transferase 1 (GST1), found in Zea mays (Maize).